A 603-amino-acid polypeptide reads, in one-letter code: Geraniol synthase Tps-5031G8, chloroplastic (603 aa).

The transit peptide at Met-1–Ser-35 directs the protein to the chloroplast. Arg-319, Asp-356, Asp-360, Arg-497, and Asp-500 together coordinate (2E)-geranyl diphosphate. Mg(2+)-binding residues include Asp-356 and Asp-360. Positions Asp-356–Asp-360 match the DDXXD motif motif. Residues Asp-500, Thr-504, and Glu-508 each coordinate Mg(2+).

It belongs to the terpene synthase family. Tpsb subfamily. In terms of assembly, monomer. Mg(2+) serves as cofactor. Requires Mn(2+) as cofactor.

It localises to the plastid. The protein resides in the chloroplast. It carries out the reaction (2E)-geranyl diphosphate + H2O = (2E)-geraniol + diphosphate. It participates in secondary metabolite biosynthesis; terpenoid biosynthesis. Monoterpene synthase (mono-TPS) involved in the biosynthesis of monoterpenes natural products. Catalyzes the conversion of (2E)-geranyl diphosphate (GPP) into geraniol. The polypeptide is Geraniol synthase Tps-5031G8, chloroplastic (Perilla frutescens var. hirtella (Perilla citriodora)).